A 287-amino-acid chain; its full sequence is Small ribosomal subunit biogenesis GTPase RsgA (287 aa).

The 158-residue stretch at 61-218 folds into the CP-type G domain; sequence ISQLKRPAVA…MVDTPGFSSL (158 aa). GTP contacts are provided by residues 110–113 and 161–169; these read NKLD and GPSGVGKST. Zn(2+) contacts are provided by Cys-242, Cys-247, His-249, and Cys-255.

The protein belongs to the TRAFAC class YlqF/YawG GTPase family. RsgA subfamily. In terms of assembly, monomer. Associates with 30S ribosomal subunit, binds 16S rRNA. It depends on Zn(2+) as a cofactor.

The protein resides in the cytoplasm. One of several proteins that assist in the late maturation steps of the functional core of the 30S ribosomal subunit. Helps release RbfA from mature subunits. May play a role in the assembly of ribosomal proteins into the subunit. Circularly permuted GTPase that catalyzes slow GTP hydrolysis, GTPase activity is stimulated by the 30S ribosomal subunit. The chain is Small ribosomal subunit biogenesis GTPase RsgA from Clostridium kluyveri (strain NBRC 12016).